Here is a 61-residue protein sequence, read N- to C-terminus: UPF0434 protein Pput_3813 (61 aa).

The protein belongs to the UPF0434 family.

In Pseudomonas putida (strain ATCC 700007 / DSM 6899 / JCM 31910 / BCRC 17059 / LMG 24140 / F1), this protein is UPF0434 protein Pput_3813.